Here is a 131-residue protein sequence, read N- to C-terminus: Sperm microtubule inner protein 11 (131 aa).

The tract at residues 18-44 (KKRNTTEETNQKEPEPTRLPPIISKDG) is disordered. The span at 21 to 33 (NTTEETNQKEPEP) shows a compositional bias: basic and acidic residues.

Microtubule inner protein component of sperm flagellar doublet microtubules.

Its subcellular location is the cytoplasm. It localises to the cytoskeleton. It is found in the flagellum axoneme. Its function is as follows. Microtubule inner protein (MIP) part of the dynein-decorated doublet microtubules (DMTs) in flagellum axoneme. May serve to reinforce and thus stabilize the microtubule structure in the sperm flagella. This chain is Sperm microtubule inner protein 11, found in Homo sapiens (Human).